The sequence spans 158 residues: Cyclic pyranopterin monophosphate synthase (158 aa).

Substrate contacts are provided by residues leucine 75–histidine 77 and methionine 113–glutamate 114. Aspartate 128 is a catalytic residue.

Belongs to the MoaC family. Homohexamer; trimer of dimers.

It carries out the reaction (8S)-3',8-cyclo-7,8-dihydroguanosine 5'-triphosphate = cyclic pyranopterin phosphate + diphosphate. It participates in cofactor biosynthesis; molybdopterin biosynthesis. In terms of biological role, catalyzes the conversion of (8S)-3',8-cyclo-7,8-dihydroguanosine 5'-triphosphate to cyclic pyranopterin monophosphate (cPMP). This Histophilus somni (strain 129Pt) (Haemophilus somnus) protein is Cyclic pyranopterin monophosphate synthase.